Reading from the N-terminus, the 78-residue chain is NAD(P)H-quinone oxidoreductase subunit L (78 aa).

Transmembrane regions (helical) follow at residues 10 to 30 (LFVIGTYLFLGTLYLVFIPLG) and 48 to 68 (LLIYSLVFLFFPGLILFAPFL).

This sequence belongs to the complex I NdhL subunit family. As to quaternary structure, NDH-1 can be composed of about 15 different subunits; different subcomplexes with different compositions have been identified which probably have different functions.

The protein resides in the cellular thylakoid membrane. It carries out the reaction a plastoquinone + NADH + (n+1) H(+)(in) = a plastoquinol + NAD(+) + n H(+)(out). The catalysed reaction is a plastoquinone + NADPH + (n+1) H(+)(in) = a plastoquinol + NADP(+) + n H(+)(out). In terms of biological role, NDH-1 shuttles electrons from an unknown electron donor, via FMN and iron-sulfur (Fe-S) centers, to quinones in the respiratory and/or the photosynthetic chain. The immediate electron acceptor for the enzyme in this species is believed to be plastoquinone. Couples the redox reaction to proton translocation, and thus conserves the redox energy in a proton gradient. Cyanobacterial NDH-1 also plays a role in inorganic carbon-concentration. This Prochlorococcus marinus (strain SARG / CCMP1375 / SS120) protein is NAD(P)H-quinone oxidoreductase subunit L.